Consider the following 245-residue polypeptide: DNA polymerase zeta processivity subunit (245 aa).

The 201-residue stretch at 3–203 (RWVEKWLRVY…PPKIKLTSLV (201 aa)) folds into the HORMA domain.

Belongs to the MAD2 family. Forms DNA polymerase zeta with REV3. Interacts with REV1.

The protein resides in the mitochondrion. Its function is as follows. Required for DNA damage induced mutagenesis. Involved in DNA repair, mitochondrial DNA repair and translesion synthesis. Has a role in the bypass of abasic (AP) sites. The sequence is that of DNA polymerase zeta processivity subunit (REV7) from Saccharomyces cerevisiae (strain ATCC 204508 / S288c) (Baker's yeast).